The primary structure comprises 455 residues: F-box/FBD/LRR-repeat protein At3g51530 (455 aa).

The interval 1 to 26 (MKNSERFSAAKPLMEQGGKSSRKPGF) is disordered. The region spanning 29-75 (EDRISELPEVLLLQILSSLPTKLVISTSVLSKRWLSLWKMVQRLEFE) is the F-box domain. 6 LRR repeats span residues 80–106 (IYDF…HLKV), 155–182 (ETLK…HLLS), 183–208 (VVYK…VLRR), 227–257 (TLLL…GIES), 277–302 (IRNV…SLDL), and 325–351 (THKV…KLID). In terms of domain architecture, FBD spans 370-417 (KWNQPKYVPECLETFMWRNCNWGREEEKEVATYILRNARQLKKATFST).

The chain is F-box/FBD/LRR-repeat protein At3g51530 from Arabidopsis thaliana (Mouse-ear cress).